The sequence spans 277 residues: RsbT co-antagonist protein RsbRB (277 aa).

The STAS domain maps to 165–276; the sequence is SSPVITLSKS…TNLAQALNYH (112 aa). T186 carries the phosphothreonine modification.

Interacts with RsbRA and RsbS in the stressosome. The stressosome probably also contains RsbRC and RsbRD. In terms of processing, phosphorylated by RsbT.

One of 4 functionally non-identical RsbR paralogs, it functions in the environmental signaling branch of the general stress response. Its function is as follows. Negative regulator of sigma-B activity. Non-phosphorylated RsbS binds to RsbT, preventing its association with RsbU. Requires any one of RsbRA, RsbRB, RsbRC or RsbRD to sequester RsbT. When RsbS and the RsbR paralog(s) are phosphorylated, they release RsbT, which can then bind and activate RsbU. This is RsbT co-antagonist protein RsbRB (rsbRB) from Bacillus subtilis (strain 168).